The primary structure comprises 496 residues: Fusarielin biosynthesis cluster transcription factor FSL7 (496 aa).

Residues 16–46 constitute a DNA-binding region (zn(2)-C6 fungal-type); the sequence is CDRCHELKIRCTRTGGTESRCDRCEKNDIDC. 5 disordered regions span residues 57 to 102, 189 to 224, 281 to 307, 348 to 379, and 444 to 470; these read PKSQ…SINS, RSINHRSGSENESMEGNAELQSTQSASGSPQEEDQM, ANHTSSSSSSNSTTVDGPSEIRNQSRS, GSTSSSTYNDTTAHPSSASLPSQTGGPTKPRT, and MTREQHVSTGHGPDRHTSPVLSSAQAA. Polar residues-rich tracts occupy residues 65-89 and 207-218; these read GPNTTARQNDTTTRGRIQQEQQEQM and ELQSTQSASGSP. Low complexity predominate over residues 281–294; that stretch reads ANHTSSSSSSNSTT. Residues 355–379 are compositionally biased toward polar residues; the sequence is YNDTTAHPSSASLPSQTGGPTKPRT. Over residues 444–460 the composition is skewed to basic and acidic residues; that stretch reads MTREQHVSTGHGPDRHT.

It is found in the nucleus. Transcription regulator that specifically up-regulates the gene cluster that mediates the biosynthesis of fusarielins F, G and H, decaketide compounds with 5 methylations and a decaline core that act as mycoestrogens as they stimulate growth of MCF-7 breast cancer cells. Probably binds the 5'-CGGNNNCCG-3' motif present in the promoter of all the cluster genes. The sequence is that of Fusarielin biosynthesis cluster transcription factor FSL7 from Gibberella zeae (strain ATCC MYA-4620 / CBS 123657 / FGSC 9075 / NRRL 31084 / PH-1) (Wheat head blight fungus).